We begin with the raw amino-acid sequence, 441 residues long: Eukaryotic translation initiation factor 3 subunit M (441 aa).

The PCI domain maps to 196-365; the sequence is ESEQAYTYLL…QTFLIHRSTY (170 aa). The segment covering 405–418 has biased composition (basic and acidic residues); sequence KEEEANKADNKYDS. A disordered region spans residues 405–441; sequence KEEEANKADNKYDSARGFQRGGQRKQPRALDDDMGLE.

This sequence belongs to the eIF-3 subunit M family. Component of the eukaryotic translation initiation factor 3 (eIF-3) complex.

The protein localises to the cytoplasm. Its function is as follows. Component of the eukaryotic translation initiation factor 3 (eIF-3) complex, which is involved in protein synthesis of a specialized repertoire of mRNAs and, together with other initiation factors, stimulates binding of mRNA and methionyl-tRNAi to the 40S ribosome. The eIF-3 complex specifically targets and initiates translation of a subset of mRNAs involved in cell proliferation. This chain is Eukaryotic translation initiation factor 3 subunit M, found in Phaeosphaeria nodorum (strain SN15 / ATCC MYA-4574 / FGSC 10173) (Glume blotch fungus).